The chain runs to 239 residues: Cyclo(L-leucyl-L-phenylalanyl) synthase (239 aa).

Catalysis depends on Ser37, which acts as the Nucleophile. Substrate-binding positions include Asn40, 178–182 (YVLAE), and Tyr202.

This sequence belongs to the CDPS family. In terms of assembly, monomer.

The enzyme catalyses L-phenylalanyl-tRNA(Phe) + L-leucyl-tRNA(Leu) = cyclo(L-phenylalanyl-L-leucyl) + tRNA(Phe) + tRNA(Leu) + H(+). Its function is as follows. Involved in the biosynthesis of albonoursin (cyclo[(alpha,beta-dehydro-Phe)-(alpha,beta-dehydro-Leu)]), an antibacterial peptide. It uses activated amino acids in the form of aminoacyl-tRNAs (aa-tRNAs) as substrates to catalyze the ATP-independent formation of cyclodipeptides which are intermediates in diketopiperazine (DKP) biosynthetic pathways. Catalyzes the formation of cyclo(L-Phe-L-Leu) (cFL) as major products from L-L-phenylalanyl-tRNA(Phe) and L-leucyl-tRNA(Leu). AlbC can also incorporate various nonpolar residues, such as L-phenylalanine, L-leucine, L-tyrosine and L-methionine, and to a much lesser extent L-alanine and L-valine, into cyclodipeptides. Indeed, ten possible cyclodipeptides composed of L-phenylalanine, L-leucine, L-tyrosine and L-methionine are all synthesized to detectable amounts by AlbC. In Streptomyces noursei (Streptomyces albulus), this protein is Cyclo(L-leucyl-L-phenylalanyl) synthase (albC).